The chain runs to 127 residues: MRIKGGKQTRVRRKKWLKQASGSFGTRHASYKVAKQTVIQAAKYAYRDRRNKKRDFRSLWILRLNAALREQGMTYSVFINLLKKHNIEINRKVLSELAIKEPSKFNLIVQKVKSEQPKAAKPAALGN.

Belongs to the bacterial ribosomal protein bL20 family.

Functionally, binds directly to 23S ribosomal RNA and is necessary for the in vitro assembly process of the 50S ribosomal subunit. It is not involved in the protein synthesizing functions of that subunit. This is Large ribosomal subunit protein bL20 (rplT) from Mycoplasma pneumoniae (strain ATCC 29342 / M129 / Subtype 1) (Mycoplasmoides pneumoniae).